The primary structure comprises 429 residues: Glutamate-1-semialdehyde 2,1-aminomutase 2 (429 aa).

Lys268 is subject to N6-(pyridoxal phosphate)lysine.

It belongs to the class-III pyridoxal-phosphate-dependent aminotransferase family. HemL subfamily. In terms of assembly, homodimer. It depends on pyridoxal 5'-phosphate as a cofactor.

The protein localises to the cytoplasm. It catalyses the reaction (S)-4-amino-5-oxopentanoate = 5-aminolevulinate. The protein operates within porphyrin-containing compound metabolism; protoporphyrin-IX biosynthesis; 5-aminolevulinate from L-glutamyl-tRNA(Glu): step 2/2. The sequence is that of Glutamate-1-semialdehyde 2,1-aminomutase 2 from Staphylococcus aureus (strain bovine RF122 / ET3-1).